The following is a 502-amino-acid chain: MTDKKYIIALDQGTTSSRAVLLDHDANIVEIAQREFTQIYPQAGWVEHNPMEIWATQSSTLNEVVAKAGITADQIAAIGITNQRETTIVWEKETGKPIYNAIVWQCRRTTEITDKLKADGHEDYIRQTTGLVVDPYFSGTKIKWILDNVEGAREQAERGELLFGTVDTWLVWKLTQGRAHVTDYTNASRTMLFNIHTLQWDDNMLAILGIPRAMLPEVRNSSEIYGQTNIGGKGGVRIPVAGMAGDQQAALYGHLCVNAGQAKNTYGTGCFMLMHTGDNAVQSQNGLLTTIACNAKGEPAYALEGSIFMGGASIQWLRDELKIVHDSYDSEYFATRVPDCNGVYVVPAFTGLGAPYWDPYARGAIFGLSRGANRNHIVRATLESIAYQTRDVLEAMQSDSGQTLQALRVDGGATENNFLMQFQADILATKVERPKVKEVTALGAAYLAGLATGFWKDLSELRDKASIEKTFVPDGDEAKRTRRYKGWKKAVKRALEWEKEEE.

ADP is bound at residue T14. ATP is bound by residues T14, T15, and S16. T14 contributes to the sn-glycerol 3-phosphate binding site. R18 lines the ADP pocket. R84, E85, Y136, and D246 together coordinate sn-glycerol 3-phosphate. Glycerol-binding residues include R84, E85, Y136, D246, and Q247. ADP contacts are provided by T268 and G311. Positions 268, 311, 315, and 412 each coordinate ATP. Positions 412 and 416 each coordinate ADP.

The protein belongs to the FGGY kinase family.

It catalyses the reaction glycerol + ATP = sn-glycerol 3-phosphate + ADP + H(+). Its pathway is polyol metabolism; glycerol degradation via glycerol kinase pathway; sn-glycerol 3-phosphate from glycerol: step 1/1. Inhibited by fructose 1,6-bisphosphate (FBP). Functionally, key enzyme in the regulation of glycerol uptake and metabolism. Catalyzes the phosphorylation of glycerol to yield sn-glycerol 3-phosphate. The protein is Glycerol kinase of Pasteurella multocida (strain Pm70).